We begin with the raw amino-acid sequence, 193 residues long: Holliday junction branch migration complex subunit RuvA (193 aa).

The segment at 1-64 is domain I; it reads MIGRIQGTLV…EDAQQLFGFA (64 aa). A domain II region spans residues 65-139; sequence TETEREAFRQ…GKLAPDLGVA (75 aa). A flexible linker region spans residues 139–143; sequence AGGKP. Residues 144 to 193 are domain III; that stretch reads QAIETSSEVLQALLALGYSEKEALLALKQIPADTSISDGIRMGLKYLSKA.

This sequence belongs to the RuvA family. In terms of assembly, homotetramer. Forms an RuvA(8)-RuvB(12)-Holliday junction (HJ) complex. HJ DNA is sandwiched between 2 RuvA tetramers; dsDNA enters through RuvA and exits via RuvB. An RuvB hexamer assembles on each DNA strand where it exits the tetramer. Each RuvB hexamer is contacted by two RuvA subunits (via domain III) on 2 adjacent RuvB subunits; this complex drives branch migration. In the full resolvosome a probable DNA-RuvA(4)-RuvB(12)-RuvC(2) complex forms which resolves the HJ.

The protein resides in the cytoplasm. Its function is as follows. The RuvA-RuvB-RuvC complex processes Holliday junction (HJ) DNA during genetic recombination and DNA repair, while the RuvA-RuvB complex plays an important role in the rescue of blocked DNA replication forks via replication fork reversal (RFR). RuvA specifically binds to HJ cruciform DNA, conferring on it an open structure. The RuvB hexamer acts as an ATP-dependent pump, pulling dsDNA into and through the RuvAB complex. HJ branch migration allows RuvC to scan DNA until it finds its consensus sequence, where it cleaves and resolves the cruciform DNA. The chain is Holliday junction branch migration complex subunit RuvA from Polynucleobacter necessarius subsp. necessarius (strain STIR1).